The following is a 386-amino-acid chain: Adiponectin receptor protein 2 (386 aa).

The disordered stretch occupies residues 1 to 71 (MNEPTENRLG…HEYSDEAPQE (71 aa)). Over 1–147 (MNEPTENRLG…SIFRIHTETG (147 aa)) the chain is Cytoplasmic. Positions 15 to 41 (PEPDIRLRKGHQLDGTRRGDNDSHQGD) are enriched in basic and acidic residues. A helical transmembrane segment spans residues 148–168 (NIWTHLLGCVFFLCLGIFYMF). At 169–181 (RPNISFVAPLQEK) the chain is on the extracellular side. A helical transmembrane segment spans residues 182–202 (VVFGLFFLGAILCLSFSWLFH). Histidine 202 is a Zn(2+) binding site. Residues 203–213 (TVYCHSEGVSR) are Cytoplasmic-facing. Residues 214 to 234 (LFSKLDYSGIALLIMGSFVPW) traverse the membrane as a helical segment. The Extracellular segment spans residues 235 to 245 (LYYSFYCNPQP). The chain crosses the membrane as a helical span at residues 246–266 (CFIYLIVICVLGIAAIIVSQW). Residues 267-273 (DMFATPQ) are Cytoplasmic-facing. The chain crosses the membrane as a helical span at residues 274-294 (YRGVRAGVFLGLGLSGIIPTL). Residues 295–309 (HYVISEGFLKAATIG) are Extracellular-facing. Residues 310 to 330 (QIGWLMLMASLYITGAALYAA) form a helical membrane-spanning segment. The Cytoplasmic segment spans residues 331–348 (RIPERFFPGKCDIWFHSH). Residues histidine 348 and histidine 352 each coordinate Zn(2+). Residues 349–369 (QLFHIFVVAGAFVHFHGVSNL) traverse the membrane as a helical segment. Residues 370–386 (QEFRFMIGGGCSEEDAL) lie on the Extracellular side of the membrane.

This sequence belongs to the ADIPOR family. May form homooligomers and heterooligomers with ADIPOR1. Interacts with APPL2 (via BAR domain); ADIPOQ dissociates this interaction. Ubiquitous. Highly expressed in skeletal muscle, liver and placenta. Weakly expressed in brain, heart, colon, spleen, kidney, thymus, small intestine, peripheral blood leukocytes and lung.

Its subcellular location is the cell membrane. Receptor for ADIPOQ, an essential hormone secreted by adipocytes that regulates glucose and lipid metabolism. Required for normal body fat and glucose homeostasis. ADIPOQ-binding activates a signaling cascade that leads to increased PPARA activity, and ultimately to increased fatty acid oxidation and glucose uptake. Has intermediate affinity for globular and full-length adiponectin. Required for normal revascularization after chronic ischemia caused by severing of blood vessels. In Homo sapiens (Human), this protein is Adiponectin receptor protein 2.